We begin with the raw amino-acid sequence, 451 residues long: uncharacterized protein (451 aa).

The disordered stretch occupies residues 415–435 (AHGDTEWLPPPHLDHGQPRVN).

The protein belongs to the Rv1128c/1148c/1588c/1702c/1945/3466 family.

This is an uncharacterized protein from Mycobacterium tuberculosis (strain ATCC 25618 / H37Rv).